The primary structure comprises 493 residues: Monocarboxylate transporter 1 (493 aa).

At methionine 1–valine 22 the chain is on the cytoplasmic side. A helical transmembrane segment spans residues leucine 23–phenylalanine 44. Residue lysine 38 participates in (S)-lactate binding. At lysine 45 to threonine 55 the chain is on the extracellular side. Residues serine 56–valine 80 traverse the membrane as a helical segment. The Cytoplasmic segment spans residues asparagine 81–glycine 84. A helical transmembrane segment spans residues serine 85 to phenylalanine 105. Residues cysteine 106–valine 109 are Extracellular-facing. A helical membrane pass occupies residues glutamine 110–leucine 132. The Cytoplasmic portion of the chain corresponds to threonine 133–alanine 146. Residues asparagine 147–phenylalanine 169 form a helical membrane-spanning segment. The Extracellular segment spans residues aspartate 170–tryptophan 174. A helical membrane pass occupies residues arginine 175–leucine 194. The Cytoplasmic segment spans residues methionine 195–arginine 254. A phosphoserine mark is found at serine 210, serine 213, and serine 220. Threonine 224 carries the phosphothreonine modification. Serine 230 is modified (phosphoserine). The chain crosses the membrane as a helical span at residues glycine 255 to glycine 281. The Extracellular portion of the chain corresponds to lysine 282–serine 288. A helical transmembrane segment spans residues glutamate 289–glycine 310. Aspartate 302 serves as a coordination point for H(+). Residue arginine 306 participates in (S)-lactate binding. Residues leucine 311–arginine 321 are Cytoplasmic-facing. A helical membrane pass occupies residues isoleucine 322–leucine 342. Residues serine 343–tyrosine 346 are Extracellular-facing. A helical transmembrane segment spans residues valine 347–phenylalanine 368. Residues glutamate 369–serine 382 are Cytoplasmic-facing. The chain crosses the membrane as a helical span at residues alanine 383–glycine 403. Residues arginine 404–tyrosine 414 are Extracellular-facing. Residues threonine 415–isoleucine 436 form a helical membrane-spanning segment. The Cytoplasmic portion of the chain corresponds to asparagine 437–valine 493. Over residues alanine 447–methionine 472 the composition is skewed to basic and acidic residues. The tract at residues alanine 447–valine 493 is disordered. Phosphoserine is present on serine 461. Threonine 462 is subject to Phosphothreonine. Residues alanine 474–aspartate 485 are compositionally biased toward polar residues. Serine 477, serine 482, serine 483, and serine 491 each carry phosphoserine.

The protein belongs to the major facilitator superfamily. Monocarboxylate porter (TC 2.A.1.13) family. In terms of assembly, interacts with isoform 2 of BSG; interaction mediates SLC16A1 targeting to the plasma membrane. Interacts with EMB; interaction mediates SLC16A1 targeting to the plasma membrane. As to expression, detected in liver, brain, spinal cord, spermatozoa, muscle, white adipose tissue and brown adipose tissue (at protein level). Widely expressed, except in pancreas, where expression is not detectable.

The protein localises to the cell membrane. It localises to the basolateral cell membrane. It is found in the apical cell membrane. It catalyses the reaction (S)-lactate(in) + H(+)(in) = (S)-lactate(out) + H(+)(out). The enzyme catalyses acetate(out) + H(+)(out) = acetate(in) + H(+)(in). It carries out the reaction acetoacetate(out) + H(+)(out) = acetoacetate(in) + H(+)(in). The catalysed reaction is pyruvate(out) + H(+)(out) = pyruvate(in) + H(+)(in). It catalyses the reaction (R)-3-hydroxybutanoate(out) + H(+)(out) = (R)-3-hydroxybutanoate(in) + H(+)(in). The enzyme catalyses 3-methyl-2-oxobutanoate(out) + H(+)(out) = 3-methyl-2-oxobutanoate(in) + H(+)(in). It carries out the reaction 4-methyl-2-oxopentanoate(out) + H(+)(out) = 4-methyl-2-oxopentanoate(in) + H(+)(in). The catalysed reaction is succinate(in) + 2 H(+)(in) = succinate(out) + 2 H(+)(out). Functionally, bidirectional proton-coupled monocarboxylate transporter. Catalyzes the rapid transport across the plasma membrane of many monocarboxylates such as lactate, pyruvate, acetate and the ketone bodies acetoacetate and beta-hydroxybutyrate, and thus contributes to the maintenance of intracellular pH. The transport direction is determined by the proton motive force and the concentration gradient of the substrate monocarboxylate. MCT1 is a major lactate exporter. Plays a role in cellular responses to a high-fat diet by modulating the cellular levels of lactate and pyruvate that contribute to the regulation of central metabolic pathways and insulin secretion, with concomitant effects on plasma insulin levels and blood glucose homeostasis. Facilitates the protonated monocarboxylate form of succinate export, that its transient protonation upon muscle cell acidification in exercising muscle and ischemic heart. Functions via alternate outward- and inward-open conformation states. Protonation and deprotonation of 302-Asp is essential for the conformational transition. The polypeptide is Monocarboxylate transporter 1 (Slc16a1) (Mus musculus (Mouse)).